A 314-amino-acid chain; its full sequence is DNA-directed RNA polymerase subunit alpha (314 aa).

Positions 1–227 (MTTFEIECIE…ELLFPLKEIN (227 aa)) are alpha N-terminal domain (alpha-NTD). Residues 237 to 314 (IEDSKINQIL…LPKEKTSKSN (78 aa)) form an alpha C-terminal domain (alpha-CTD) region.

It belongs to the RNA polymerase alpha chain family. As to quaternary structure, in plastids the minimal PEP RNA polymerase catalytic core is composed of four subunits: alpha, beta, beta', and beta''. When a (nuclear-encoded) sigma factor is associated with the core the holoenzyme is formed, which can initiate transcription.

The protein resides in the plastid. Its subcellular location is the chloroplast. It catalyses the reaction RNA(n) + a ribonucleoside 5'-triphosphate = RNA(n+1) + diphosphate. Functionally, DNA-dependent RNA polymerase catalyzes the transcription of DNA into RNA using the four ribonucleoside triphosphates as substrates. This chain is DNA-directed RNA polymerase subunit alpha, found in Pyrenomonas salina.